A 210-amino-acid chain; its full sequence is Ribosomal RNA small subunit methyltransferase G (210 aa).

S-adenosyl-L-methionine contacts are provided by residues Leu78, Ile124–Glu125, and Arg138.

Belongs to the methyltransferase superfamily. RNA methyltransferase RsmG family.

The protein localises to the cytoplasm. The enzyme catalyses guanosine(527) in 16S rRNA + S-adenosyl-L-methionine = N(7)-methylguanosine(527) in 16S rRNA + S-adenosyl-L-homocysteine. In terms of biological role, specifically methylates the N7 position of guanine in position 527 of 16S rRNA. The sequence is that of Ribosomal RNA small subunit methyltransferase G from Bordetella bronchiseptica (strain ATCC BAA-588 / NCTC 13252 / RB50) (Alcaligenes bronchisepticus).